A 607-amino-acid chain; its full sequence is BTB/POZ domain-containing protein DOT3 (607 aa).

One can recognise a BTB domain in the interval 52–121 (TDLSIQVNDI…CYNLPLDLNP (70 aa)). One can recognise an NPH3 domain in the interval 211-487 (RCLYNDIATL…VQINTQVLFS (277 aa)). Y428 is subject to Phosphotyrosine. Disordered regions lie at residues 498 to 520 (DKLP…SRDN) and 573 to 607 (KSFQ…MSMS). 2 stretches are compositionally biased toward basic and acidic residues: residues 499 to 520 (KLPE…SRDN) and 577 to 586 (TKREDEETRE). Residues 511 to 563 (REDKRMSRDNEIIKTLKEELENVKKKMSELQSDYNELQQEYERLSSKQKSSHN) adopt a coiled-coil conformation.

This sequence belongs to the NPH3 family. As to expression, expressed in emerging leaf primordia.

The protein operates within protein modification; protein ubiquitination. Functionally, may act as a substrate-specific adapter of an E3 ubiquitin-protein ligase complex (CUL3-RBX1-BTB) which mediates the ubiquitination and subsequent proteasomal degradation of target proteins. Involved in leaf vasculature patterning. The sequence is that of BTB/POZ domain-containing protein DOT3 from Arabidopsis thaliana (Mouse-ear cress).